The chain runs to 220 residues: Probable nicotinate-nucleotide adenylyltransferase (220 aa).

This sequence belongs to the NadD family.

It carries out the reaction nicotinate beta-D-ribonucleotide + ATP + H(+) = deamido-NAD(+) + diphosphate. It participates in cofactor biosynthesis; NAD(+) biosynthesis; deamido-NAD(+) from nicotinate D-ribonucleotide: step 1/1. Its function is as follows. Catalyzes the reversible adenylation of nicotinate mononucleotide (NaMN) to nicotinic acid adenine dinucleotide (NaAD). This is Probable nicotinate-nucleotide adenylyltransferase from Yersinia pseudotuberculosis serotype O:1b (strain IP 31758).